The primary structure comprises 545 residues: Baeyer-Villiger monooxygenase (545 aa).

The FAD site is built by phenylalanine 24, aspartate 45, tryptophan 54, aspartate 65, tyrosine 71, and valine 118.

Belongs to the FAD-binding monooxygenase family. Requires FAD as cofactor.

Catalyzes a Baeyer-Villiger oxidation reaction, i.e. the insertion of an oxygen atom into a carbon-carbon bond adjacent to a carbonyl, which converts ketones to esters or lactones using NADPH as an electron donor. Besides cycloalkanones, can use cyclic alpha,beta-unsaturated ketones as substrates, leading to conjugated ene-lactones. Can also act on methylated cycloalkanones and methylated cycloalkenones with high enantioselectivity in some cases. The protein is Baeyer-Villiger monooxygenase of Pseudooceanicola batsensis (strain ATCC BAA-863 / DSM 15984 / KCTC 12145 / HTCC2597) (Oceanicola batsensis).